The sequence spans 231 residues: Small ribosomal subunit protein uS5 (231 aa).

One can recognise an S5 DRBM domain in the interval 61–124; it reads KFRSKKPYRM…NRAKLNIIKV (64 aa).

This sequence belongs to the universal ribosomal protein uS5 family. As to quaternary structure, part of the 30S ribosomal subunit. Contacts protein S4.

With S4 and S12 plays an important role in translational accuracy. The protein is Small ribosomal subunit protein uS5 of Nanoarchaeum equitans (strain Kin4-M).